A 188-amino-acid polypeptide reads, in one-letter code: Ubiquitin-like protein 4B (188 aa).

In terms of domain architecture, Ubiquitin-like spans 1–76 (MFLTVKLLLG…INVIMRPPED (76 aa)). Residues 146–188 (EEKEAPAVASELEQNNGGGGGGGGTGGEGGGKKEEEEGEEADQ) form a disordered region. The span at 161–174 (NGGGGGGGGTGGEG) shows a compositional bias: gly residues.

In terms of tissue distribution, expressed specifically in post-meiotic male germ cells of the testis. Abundantly expressed in stage 14-16 spermatids.

Its subcellular location is the cytoplasm. The chain is Ubiquitin-like protein 4B (Ubl4b) from Mus musculus (Mouse).